The chain runs to 33 residues: Photosystem II reaction center protein Psb30 (33 aa).

The helical transmembrane segment at 5–25 threads the bilayer; that stretch reads LALTLVSLVLVVSAGPLVVVL.

The protein belongs to the Psb30/Ycf12 family. As to quaternary structure, PSII is composed of 1 copy each of membrane proteins PsbA, PsbB, PsbC, PsbD, PsbE, PsbF, PsbH, PsbI, PsbJ, PsbK, PsbL, PsbM, PsbT, PsbX, PsbY, PsbZ, Psb30/Ycf12, peripheral proteins of the oxygen-evolving complex and a large number of cofactors. It forms dimeric complexes.

The protein resides in the plastid. The protein localises to the chloroplast thylakoid membrane. Its function is as follows. A core subunit of photosystem II (PSII), required for optimal photosynthesis, probably helps stabilize the reaction center. The protein is Photosystem II reaction center protein Psb30 of Chlamydomonas reinhardtii (Chlamydomonas smithii).